The chain runs to 158 residues: Rhombotin-2 (158 aa).

LIM zinc-binding domains are found at residues 28 to 90 (LTCG…LFGQ) and 92 to 154 (GLCA…WTKL).

In terms of tissue distribution, expression becomes restricted to the ventral blood island (VBI) as the embryo develops. In late neurula and early tailbud embryos, also expressed in the dorsal lateral plate (DLP), the site of definitive hematopoiesis in the tadpole. Expression in the DLP diminishes during tailbud stages. Expressed in circulating blood cells of tadpoles. Also expressed in non-hematopoietic sites, including the tailbud region and the central nervous system of early neurula embryos.

The protein localises to the nucleus. Its function is as follows. Transcription factor that acts synergistically with tal1/scl and gata1 to specify embryonic dorsal mesoderm to a hematopoietic fate. Induces globin gene expression together with fgf. In Xenopus laevis (African clawed frog), this protein is Rhombotin-2.